We begin with the raw amino-acid sequence, 546 residues long: Chaperonin GroEL (546 aa).

Residues 29–32, Lys50, 86–90, Gly414, and Asp492 each bind ATP; these read TMGP and DGTTT.

It belongs to the chaperonin (HSP60) family. As to quaternary structure, forms a cylinder of 14 subunits composed of two heptameric rings stacked back-to-back. Interacts with the co-chaperonin GroES.

The protein resides in the cytoplasm. It carries out the reaction ATP + H2O + a folded polypeptide = ADP + phosphate + an unfolded polypeptide.. Functionally, together with its co-chaperonin GroES, plays an essential role in assisting protein folding. The GroEL-GroES system forms a nano-cage that allows encapsulation of the non-native substrate proteins and provides a physical environment optimized to promote and accelerate protein folding. The protein is Chaperonin GroEL of Helicobacter pylori (strain Shi470).